The following is a 477-amino-acid chain: Salivary plasminogen activator alpha 1 (477 aa).

Residues 1 to 36 (MVNTMKTKLLCVLLLCGAVFSLPRQETYRQLARGSR) form the signal peptide. The Fibronectin type-I domain maps to 40-82 (VACKDEITQMTYRRQESWLRPEVRSKRVEHCQCDRGQARCHTV). 14 disulfide bridges follow: Cys42–Cys72, Cys70–Cys79, Cys87–Cys98, Cys92–Cys109, Cys111–Cys120, Cys128–Cys209, Cys149–Cys191, Cys180–Cys204, Cys214–Cys345, Cys257–Cys273, Cys265–Cys334, Cys359–Cys434, Cys391–Cys407, and Cys424–Cys452. Residues 83-121 (PVNSCSEPRCFNGGTCWQAVYFSDFVCQCPAGYTGKRCE) form the EGF-like domain. Positions 128 to 209 (CYEGQGVTYR…TSESCSVPVC (82 aa)) constitute a Kringle domain. N-linked (GlcNAc...) asparagine glycosylation occurs at Asn153. Residues 226-476 (STGGLFTDIT…YLGWIRDNMH (251 aa)) enclose the Peptidase S1 domain. Catalysis depends on charge relay system residues His272 and Asp321. N-linked (GlcNAc...) asparagine glycosylation is present at Asn398. Ser428 (charge relay system) is an active-site residue.

The protein belongs to the peptidase S1 family. In terms of assembly, monomer.

The protein resides in the secreted. The enzyme catalyses Specific cleavage of Arg-|-Val bond in plasminogen to form plasmin.. Activity toward plasminogen is stimulated in the presence of fibrin I. Probably essential to support the feeding habits of this exclusively haematophagous animal. Potent thrombolytic agent. The chain is Salivary plasminogen activator alpha 1 from Desmodus rotundus (Vampire bat).